A 202-amino-acid polypeptide reads, in one-letter code: Glycoprotein U22 (202 aa).

Residues 1 to 20 (MVPQGCSLVWVSALYVSVIA) form the signal peptide. 4 N-linked (GlcNAc...) asparagine; by host glycosylation sites follow: N54, N107, N112, and N125. The helical transmembrane segment at 172–192 (FVYYCISVYLFAVVVLCSCWF) threads the bilayer.

It is found in the membrane. This Homo sapiens (Human) protein is Glycoprotein U22 (U22).